We begin with the raw amino-acid sequence, 247 residues long: Adenosylcobinamide-GDP ribazoletransferase (247 aa).

The next 5 helical transmembrane spans lie at 34-54, 59-79, 113-133, 138-158, and 194-214; these read IITF…VFMV, CGVP…TGGF, GGLA…ELAL, ILAS…LLMY, and VLLP…AIFI.

It belongs to the CobS family. Mg(2+) is required as a cofactor.

The protein localises to the cell inner membrane. It catalyses the reaction alpha-ribazole + adenosylcob(III)inamide-GDP = adenosylcob(III)alamin + GMP + H(+). The catalysed reaction is alpha-ribazole 5'-phosphate + adenosylcob(III)inamide-GDP = adenosylcob(III)alamin 5'-phosphate + GMP + H(+). Its pathway is cofactor biosynthesis; adenosylcobalamin biosynthesis; adenosylcobalamin from cob(II)yrinate a,c-diamide: step 7/7. Its function is as follows. Joins adenosylcobinamide-GDP and alpha-ribazole to generate adenosylcobalamin (Ado-cobalamin). Also synthesizes adenosylcobalamin 5'-phosphate from adenosylcobinamide-GDP and alpha-ribazole 5'-phosphate. In Escherichia coli O7:K1 (strain IAI39 / ExPEC), this protein is Adenosylcobinamide-GDP ribazoletransferase.